We begin with the raw amino-acid sequence, 343 residues long: Heat-inducible transcription repressor HrcA (343 aa).

Belongs to the HrcA family.

Functionally, negative regulator of class I heat shock genes (grpE-dnaK-dnaJ and groELS operons). Prevents heat-shock induction of these operons. In Bacillus cytotoxicus (strain DSM 22905 / CIP 110041 / 391-98 / NVH 391-98), this protein is Heat-inducible transcription repressor HrcA.